The sequence spans 91 residues: Large ribosomal subunit protein uL23 (91 aa).

Belongs to the universal ribosomal protein uL23 family. Part of the 50S ribosomal subunit. Contacts protein L29, and trigger factor when it is bound to the ribosome.

Functionally, one of the early assembly proteins it binds 23S rRNA. One of the proteins that surrounds the polypeptide exit tunnel on the outside of the ribosome. Forms the main docking site for trigger factor binding to the ribosome. This chain is Large ribosomal subunit protein uL23, found in Staphylococcus haemolyticus (strain JCSC1435).